A 67-amino-acid chain; its full sequence is Large ribosomal subunit protein uL29 (67 aa).

The protein belongs to the universal ribosomal protein uL29 family.

In Sphingopyxis alaskensis (strain DSM 13593 / LMG 18877 / RB2256) (Sphingomonas alaskensis), this protein is Large ribosomal subunit protein uL29.